Here is a 62-residue protein sequence, read N- to C-terminus: MGKQCFVTGRKASTGNHRSHALNANKRRWNANLQKVRILVDGKPKKVWVSARALKSGKVTRV.

It belongs to the bacterial ribosomal protein bL28 family.

This is Large ribosomal subunit protein bL28 from Staphylococcus epidermidis (strain ATCC 12228 / FDA PCI 1200).